The following is a 379-amino-acid chain: Peritrophin-48 (379 aa).

Positions 1 to 20 (MKAKTLTATLALILLAFAQA) are cleaved as a signal peptide. 2 Chitin-binding type-2 domains span residues 25 to 83 (ASYC…NCFF) and 86 to 143 (ANPC…NTGN). Cystine bridges form between C60/C73 and C120/C133. N150 and N168 each carry an N-linked (GlcNAc...) asparagine glycan. Chitin-binding type-2 domains lie at 151–208 (LSVC…ACSR), 224–283 (TSPC…RTLK), and 285–356 (CNRC…ACEN). Residues C185 and C198 are joined by a disulfide bond. Residues N247 and N252 are each glycosylated (N-linked (GlcNAc...) asparagine). C324 and C337 are disulfide-bonded. 3 N-linked (GlcNAc...) asparagine glycosylation sites follow: N341, N356, and N373.

Post-translationally, glycosylated. As to expression, larval peritrophic membrane.

Its function is as follows. Binds chitin and may bind related oligosaccharide structures. In Chrysomya bezziana (Old world screw-worm fly), this protein is Peritrophin-48.